Reading from the N-terminus, the 308-residue chain is Ribosomal RNA large subunit methyltransferase F (308 aa).

The protein belongs to the methyltransferase superfamily. METTL16/RlmF family.

It is found in the cytoplasm. It carries out the reaction adenosine(1618) in 23S rRNA + S-adenosyl-L-methionine = N(6)-methyladenosine(1618) in 23S rRNA + S-adenosyl-L-homocysteine + H(+). Functionally, specifically methylates the adenine in position 1618 of 23S rRNA. The sequence is that of Ribosomal RNA large subunit methyltransferase F from Escherichia coli O157:H7.